The chain runs to 64 residues: DNA gyrase inhibitor YacG (64 aa).

Zn(2+) is bound by residues Cys-9, Cys-12, Cys-28, and Cys-32. A disordered region spans residues 45-64 (KRIPSSGDLSESDDWSEEPK). Acidic residues predominate over residues 54–64 (SESDDWSEEPK).

Belongs to the DNA gyrase inhibitor YacG family. In terms of assembly, interacts with GyrB. The cofactor is Zn(2+).

Functionally, inhibits all the catalytic activities of DNA gyrase by preventing its interaction with DNA. Acts by binding directly to the C-terminal domain of GyrB, which probably disrupts DNA binding by the gyrase. This is DNA gyrase inhibitor YacG from Escherichia fergusonii (strain ATCC 35469 / DSM 13698 / CCUG 18766 / IAM 14443 / JCM 21226 / LMG 7866 / NBRC 102419 / NCTC 12128 / CDC 0568-73).